Here is a 253-residue protein sequence, read N- to C-terminus: tRNA pseudouridine synthase A (253 aa).

Aspartate 53 acts as the Nucleophile in catalysis. Residue tyrosine 112 participates in substrate binding.

It belongs to the tRNA pseudouridine synthase TruA family. In terms of assembly, homodimer.

The catalysed reaction is uridine(38/39/40) in tRNA = pseudouridine(38/39/40) in tRNA. Its function is as follows. Formation of pseudouridine at positions 38, 39 and 40 in the anticodon stem and loop of transfer RNAs. This is tRNA pseudouridine synthase A from Lactococcus lactis subsp. lactis (strain IL1403) (Streptococcus lactis).